Here is a 22-residue protein sequence, read N- to C-terminus: ANIVFDVESATTGTYSTFLTSF.

Its subcellular location is the secreted. It localises to the extracellular space. The protein localises to the golgi apparatus. The protein resides in the vacuole. It catalyses the reaction Endohydrolysis of the N-glycosidic bond at one specific adenosine on the 28S rRNA.. Its function is as follows. Nicks pBR322 dsDNA. Has adenine polynucleotide glycosidase activity on herring sperm ssDNA. The polypeptide is Dioicin-1 (Phytolacca dioica (Bella sombra tree)).